A 282-amino-acid polypeptide reads, in one-letter code: MQIVNISAYKFVTLNDRETLRPALLAECQARDLKGTVLLAPEGINIFLAGSREAIDGIVGWLRADARFADLAPKESLSDHQPFRRLLVRLKKEIITMRYPLIRPEDGRAPSLPPATLKRWLDQGHDDDGREVVMLDTRNGFEVAVGTFRDAVEYGIRKFTEFPPAIAAHKDDFAGKTVVSFCTGGIRCEKAAIHMQEIGLQHVYQLEGGILKYFEEVGADHYDGDCFVFDHRTALNAELLPAGPKQCFACRAVVTPEEQQSADYIPGQRCPHCADHQARAAT.

In terms of domain architecture, Rhodanese spans 128-222 (DGREVVMLDT…YFEEVGADHY (95 aa)). Catalysis depends on C182, which acts as the Cysteine persulfide intermediate.

Belongs to the TrhO family.

The enzyme catalyses uridine(34) in tRNA + AH2 + O2 = 5-hydroxyuridine(34) in tRNA + A + H2O. Its function is as follows. Catalyzes oxygen-dependent 5-hydroxyuridine (ho5U) modification at position 34 in tRNAs. In Ralstonia nicotianae (strain ATCC BAA-1114 / GMI1000) (Ralstonia solanacearum), this protein is tRNA uridine(34) hydroxylase.